The following is a 192-amino-acid chain: Elongation factor P (192 aa).

This sequence belongs to the elongation factor P family.

The protein resides in the cytoplasm. It participates in protein biosynthesis; polypeptide chain elongation. Functionally, involved in peptide bond synthesis. Stimulates efficient translation and peptide-bond synthesis on native or reconstituted 70S ribosomes in vitro. Probably functions indirectly by altering the affinity of the ribosome for aminoacyl-tRNA, thus increasing their reactivity as acceptors for peptidyl transferase. This Borrelia recurrentis (strain A1) protein is Elongation factor P.